The following is a 369-amino-acid chain: 2-aminoethylphosphonate--pyruvate transaminase (369 aa).

Lys-193 carries the post-translational modification N6-(pyridoxal phosphate)lysine.

Belongs to the class-V pyridoxal-phosphate-dependent aminotransferase family. PhnW subfamily. As to quaternary structure, homodimer. It depends on pyridoxal 5'-phosphate as a cofactor.

The enzyme catalyses (2-aminoethyl)phosphonate + pyruvate = phosphonoacetaldehyde + L-alanine. Involved in phosphonate degradation. This is 2-aminoethylphosphonate--pyruvate transaminase from Pseudomonas fluorescens (strain Pf0-1).